The primary structure comprises 163 residues: Lipoprotein signal peptidase (163 aa).

4 helical membrane-spanning segments follow: residues 9 to 29, 39 to 59, 67 to 87, and 92 to 112; these read YLAI…SALS, VLPF…SFLA, WFFT…LYKS, and LLCI…LDRV. Residues aspartate 119 and aspartate 137 contribute to the active site. A helical membrane pass occupies residues 130-150; it reads WPAFNIADSAICVGAALIIWG.

This sequence belongs to the peptidase A8 family.

It is found in the cell inner membrane. The catalysed reaction is Release of signal peptides from bacterial membrane prolipoproteins. Hydrolyzes -Xaa-Yaa-Zaa-|-(S,diacylglyceryl)Cys-, in which Xaa is hydrophobic (preferably Leu), and Yaa (Ala or Ser) and Zaa (Gly or Ala) have small, neutral side chains.. It participates in protein modification; lipoprotein biosynthesis (signal peptide cleavage). In terms of biological role, this protein specifically catalyzes the removal of signal peptides from prolipoproteins. In Polynucleobacter necessarius subsp. necessarius (strain STIR1), this protein is Lipoprotein signal peptidase.